Consider the following 96-residue polypeptide: Small ribosomal subunit protein uS19 (96 aa).

This sequence belongs to the universal ribosomal protein uS19 family.

Functionally, protein S19 forms a complex with S13 that binds strongly to the 16S ribosomal RNA. The chain is Small ribosomal subunit protein uS19 from Koribacter versatilis (strain Ellin345).